The sequence spans 271 residues: NTNNTIEEQLSTLEKYSQGRLGVALINTEDNSQITYRGEERFAMASTSKVMAVAAILKESEKQAGLLDKNIIITKSDLVAYSPITEKHLATGMSLAQLSAATLQYSDNTAMNKILDYLGGPSKVTQFARSINDVTYRLDRKEPELNTAIHGDPRDTTSPIAMAKSLQALTLGDALGQSQRQQLVTWLKGNTTGDHSIKAGLPKHWIVGDKTGSGDYGTTNDIAVIWPKNHAPLILVVYFTQQEQDAKYRKDIIVKATEIVTKEFSNTSQKK.

The active-site Acyl-ester intermediate is Ser46. 210 to 212 contributes to the substrate binding site; the sequence is KTG.

This sequence belongs to the class-A beta-lactamase family. In terms of assembly, monomer.

The enzyme catalyses a beta-lactam + H2O = a substituted beta-amino acid. In terms of biological role, hydrolyzes broad-spectrum beta-lactam antibiotics. Active against cephalosporins. The sequence is that of Beta-lactamase from Proteus vulgaris.